The primary structure comprises 110 residues: Protein C-ets-2 (110 aa).

The segment at residues 1 to 84 (SGPIQLWQFL…AGKRYVYRFV (84 aa)) is a DNA-binding region (ETS).

This sequence belongs to the ETS family.

The protein resides in the nucleus. Probable transcription factor. The protein is Protein C-ets-2 (ETS-2) of Lytechinus variegatus (Green sea urchin).